A 37-amino-acid chain; its full sequence is MNSILIITSLLIIFSIFSHALIKLGIGISNNPDKTDV.

The helical transmembrane segment at 4-24 (ILIITSLLIIFSIFSHALIKL) threads the bilayer.

It is found in the cell inner membrane. In Escherichia coli (strain K12), this protein is Protein YnaM.